Here is a 481-residue protein sequence, read N- to C-terminus: MGPEAAGPGRGAAPRLQVRTWIEPVVAATQVASSLYEAGLLLVVKASFGAGAGAGAGAASNHSAGPPRGAPEDQQQRAISNFYIVYNLVVGLTPLLSAYALGWLSDRRHRKVAICVALLGFLLSRVGLLLKVLLDWPVEVLYGAAALNGLCGGFSAFWAGVMALGSLGSSEGRRSVRLVLIDLILGLAGFCGSMASGHLFKQVAGHSGQGLVLTACSVSCATFALLYSLLVLKVPEAAAGSGQALSAGDSVAGTVGTYRTLDPDHSDKQSVQGLHPPSPGKAKPRRTIIALLFLGAIVYDLAVVGTVDVMPLFVLREPLSWNQVQVGYGMAAGYTIFITSFLGVLVFSRCFQDTTMIMIGMVSFGSGALLLAFVKETYMFYIARAVMLFALIPITTIRSAMSKLIKGSSYGKVFVILQLSLTLTGVVTSTVYNKIYQVTMEKFIGTCFALSSFLSFLAIIPIGIVAYKQASWLQYGDVRET.

Topologically, residues 1–37 are cytoplasmic; the sequence is MGPEAAGPGRGAAPRLQVRTWIEPVVAATQVASSLYE. The chain crosses the membrane as a helical span at residues 38-58; it reads AGLLLVVKASFGAGAGAGAGA. Residues 59 to 83 lie on the Extracellular side of the membrane; the sequence is ASNHSAGPPRGAPEDQQQRAISNFY. N61 is a glycosylation site (N-linked (GlcNAc...) asparagine). A helical membrane pass occupies residues 84–104; it reads IVYNLVVGLTPLLSAYALGWL. Over 105-113 the chain is Cytoplasmic; sequence SDRRHRKVA. Residues 114-134 form a helical membrane-spanning segment; the sequence is ICVALLGFLLSRVGLLLKVLL. Topologically, residues 135-143 are extracellular; the sequence is DWPVEVLYG. The chain crosses the membrane as a helical span at residues 144–164; the sequence is AAALNGLCGGFSAFWAGVMAL. Topologically, residues 165-179 are cytoplasmic; the sequence is GSLGSSEGRRSVRLV. The chain crosses the membrane as a helical span at residues 180–200; the sequence is LIDLILGLAGFCGSMASGHLF. Residues 201-210 lie on the Extracellular side of the membrane; sequence KQVAGHSGQG. The helical transmembrane segment at 211 to 231 threads the bilayer; it reads LVLTACSVSCATFALLYSLLV. At 232 to 286 the chain is on the cytoplasmic side; that stretch reads LKVPEAAAGSGQALSAGDSVAGTVGTYRTLDPDHSDKQSVQGLHPPSPGKAKPRR. A disordered region spans residues 263–282; sequence PDHSDKQSVQGLHPPSPGKA. A helical transmembrane segment spans residues 287–307; it reads TIIALLFLGAIVYDLAVVGTV. The Extracellular portion of the chain corresponds to 308 to 326; that stretch reads DVMPLFVLREPLSWNQVQV. A helical membrane pass occupies residues 327–347; sequence GYGMAAGYTIFITSFLGVLVF. Over 348–353 the chain is Cytoplasmic; sequence SRCFQD. Residues 354–374 traverse the membrane as a helical segment; the sequence is TTMIMIGMVSFGSGALLLAFV. At 375–376 the chain is on the extracellular side; it reads KE. A helical membrane pass occupies residues 377 to 397; the sequence is TYMFYIARAVMLFALIPITTI. At 398 to 412 the chain is on the cytoplasmic side; the sequence is RSAMSKLIKGSSYGK. Residues 413-433 form a helical membrane-spanning segment; that stretch reads VFVILQLSLTLTGVVTSTVYN. Residues 434–446 are Extracellular-facing; sequence KIYQVTMEKFIGT. A helical membrane pass occupies residues 447 to 467; it reads CFALSSFLSFLAIIPIGIVAY. At 468–481 the chain is on the cytoplasmic side; the sequence is KQASWLQYGDVRET.

This sequence belongs to the major facilitator superfamily. SLC46A family. Glycosylated. As to expression, highly expressed by the epididymal duct epithelium.

The protein localises to the endosome membrane. Its subcellular location is the cell membrane. The enzyme catalyses N-acetyl-beta-D-glucosaminyl-(1-&gt;4)-1,6-anhydro-N-acetyl-beta-D-muramoyl-L-alanyl-gamma-D-glutamyl-meso-2,6-diaminopimeloyl-D-alanine(out) + n H(+)(out) = N-acetyl-beta-D-glucosaminyl-(1-&gt;4)-1,6-anhydro-N-acetyl-beta-D-muramoyl-L-alanyl-gamma-D-glutamyl-meso-2,6-diaminopimeloyl-D-alanine(in) + n H(+)(in). The catalysed reaction is L-alanyl-gamma-D-glutamyl-meso-2,6-diaminopimelate(out) + n H(+)(out) = L-alanyl-gamma-D-glutamyl-meso-2,6-diaminopimelate(in) + n H(+)(in). It carries out the reaction N-acetyl-D-muramoyl-L-alanyl-D-isoglutamine(out) + n H(+)(out) = N-acetyl-D-muramoyl-L-alanyl-D-isoglutamine(in) + n H(+)(in). It catalyses the reaction 2',3'-cGAMP(out) + n H(+)(out) = 2',3'-cGAMP(in) + n H(+)(in). The enzyme catalyses 3',3'-cGAMP(out) + n H(+)(out) = 3',3'-cGAMP(in) + n H(+)(in). In terms of biological role, proton-coupled transporter that delivers pathogen-associated or danger-associated molecular patterns to cytosolic pattern recognition receptors as part of the innate immune response to microbes or tissue injury. Has selectivity toward muropeptides that contain the amino acid diaminopimelic acid (DAP-type peptidoglycan muropeptides) including Tri-DAP and tracheal toxin (TCT), common in Gram-negative bacteria and Gram-positive bacilli. In the context of immune recognition of skin microbiota, shuttles bacterial muropeptides across the endolysosomal membranes into the cytosol for recognition by NOD1, triggering MYD88-dependent secretion of IL1A and neutrophil recruitment in a pyroptosis-type inflammatory process. To a lesser extent and redundantly, transports muramyl dipeptides derived from most bacterial proteoglycans, eliciting NOD2 receptor activation and downstream inflammatory responses. Postulated to function as an importer of cyclic GMP-AMP dinucleotides (cGAMPs) in monocyte and macrophage cell lineages. Selectively imports cGAMPs derived from pathogenic bacteria such as 3'3'-cGAMP thus providing for differential immune recognition of pathogenic versus commensal bacteria. During tumorigenesis may transport extracellular tumor-derived 2'3'-cGAMP across the plasma membrane of M1-polarized macrophages to activate the anti-tumoral stimulator of interferon genes (STING) pathway. The transport mechanism, its electrogenicity and stoichiometry remain to be elucidated. The polypeptide is Solute carrier family 46 member 2 (Canis lupus familiaris (Dog)).